Here is an 82-residue protein sequence, read N- to C-terminus: RNA-binding protein Hfq (82 aa).

A Sm domain is found at 10–69 (DPFLNALRREHVPVSIYLVNGIKLQGQIESFDQYVVLLRNTVTQMVYKHAISTIVPGRAV).

It belongs to the Hfq family. In terms of assembly, homohexamer.

Its function is as follows. RNA chaperone that binds small regulatory RNA (sRNAs) and mRNAs to facilitate mRNA translational regulation in response to envelope stress, environmental stress and changes in metabolite concentrations. Also binds with high specificity to tRNAs. This chain is RNA-binding protein Hfq, found in Albidiferax ferrireducens (strain ATCC BAA-621 / DSM 15236 / T118) (Rhodoferax ferrireducens).